The primary structure comprises 201 residues: Ribonuclease HII (201 aa).

Positions Asp12 to Gln201 constitute an RNase H type-2 domain. A divalent metal cation-binding residues include Asp18, Glu19, and Asp110.

The protein belongs to the RNase HII family. Mn(2+) is required as a cofactor. Requires Mg(2+) as cofactor.

The protein localises to the cytoplasm. The enzyme catalyses Endonucleolytic cleavage to 5'-phosphomonoester.. In terms of biological role, endonuclease that specifically degrades the RNA of RNA-DNA hybrids. This chain is Ribonuclease HII, found in Pseudomonas aeruginosa (strain ATCC 15692 / DSM 22644 / CIP 104116 / JCM 14847 / LMG 12228 / 1C / PRS 101 / PAO1).